Consider the following 367-residue polypeptide: Heme A synthase (367 aa).

5 helical membrane passes run 25–45 (ALRF…LVGG), 111–131 (LIAR…WLTG), 139–159 (WPLV…WWMV), 174–194 (LATH…IMRG), and 210–230 (GFAA…ALVA). Heme is bound at residue His274. The next 3 helical transmembrane spans lie at 276-296 (IGAY…LRAA), 305-325 (AVVL…TLLM), and 327-347 (VPLH…GFAI). His335 contributes to the heme binding site.

The protein belongs to the COX15/CtaA family. Type 2 subfamily. In terms of assembly, interacts with CtaB. Requires heme b as cofactor.

The protein resides in the cell membrane. It catalyses the reaction Fe(II)-heme o + 2 A + H2O = Fe(II)-heme a + 2 AH2. It functions in the pathway porphyrin-containing compound metabolism; heme A biosynthesis; heme A from heme O: step 1/1. Catalyzes the conversion of heme O to heme A by two successive hydroxylations of the methyl group at C8. The first hydroxylation forms heme I, the second hydroxylation results in an unstable dihydroxymethyl group, which spontaneously dehydrates, resulting in the formyl group of heme A. The protein is Heme A synthase of Rhizobium leguminosarum bv. trifolii (strain WSM2304).